Reading from the N-terminus, the 379-residue chain is Putative FBD-associated F-box protein At5g38570 (379 aa).

An F-box domain is found at 1–47 (MDNINGLPDDLLVKILSFVPTYVAVSTCVLSKRWEFLWMWLPNLEFV). In terms of domain architecture, FBD spans 295–345 (CWNQPSSVLECLLSSLKILNWSAYFGRPQDRDIAVYILKNACHLKTATFLT).

The polypeptide is Putative FBD-associated F-box protein At5g38570 (Arabidopsis thaliana (Mouse-ear cress)).